Consider the following 281-residue polypeptide: MSYPSQGHYLPPEHQYLTAATLASHGHEHLYAHSQLSDSPPRQDLAQRKRPKYTRSKTGCLTCRMKKIKCDETKPTCARCTHGQRECTWPDASSPRRRAPLRRGSIDDRPSTAGSSVSDDSSPSIRNSTPPRRFQMDSPESGLLPPPSARRNMDPFLQLPPVVAPESRHQHIRPRPPPFTPPQSEQHNLTLSPDPSEYCRYDRYDATYAQTHHLHSSHSSPSSRAPHMVTGIRGMGYSPESVHQWNSPPLLSPIESSSYQHYPLQERGMVGPSDNHHFRYQ.

Residues 60–87 (CLTCRMKKIKCDETKPTCARCTHGQREC) constitute a DNA-binding region (zn(2)-C6 fungal-type).

It localises to the nucleus. Transcription factor that acts as a negative regulator of basidioma development via repressing the expression of genes involved in basidioma development, including hydrophobins such as Hyd-1 and Hyd-8, lectins such as JRL1, as well as the fruiting body differentiation gene FVFD16. The chain is Transcription factor lfc1 from Flammulina velutipes (Agaricus velutipes).